Reading from the N-terminus, the 35-residue chain is Photosystem II reaction center protein T (35 aa).

Residues 3-23 traverse the membrane as a helical segment; the sequence is ALVYTFLLVGTLGIIFFAIFF.

This sequence belongs to the PsbT family. As to quaternary structure, PSII is composed of 1 copy each of membrane proteins PsbA, PsbB, PsbC, PsbD, PsbE, PsbF, PsbH, PsbI, PsbJ, PsbK, PsbL, PsbM, PsbT, PsbY, PsbZ, Psb30/Ycf12, at least 3 peripheral proteins of the oxygen-evolving complex and a large number of cofactors. It forms dimeric complexes.

It is found in the plastid. Its subcellular location is the chloroplast thylakoid membrane. Functionally, found at the monomer-monomer interface of the photosystem II (PS II) dimer, plays a role in assembly and dimerization of PSII. PSII is a light-driven water plastoquinone oxidoreductase, using light energy to abstract electrons from H(2)O, generating a proton gradient subsequently used for ATP formation. The sequence is that of Photosystem II reaction center protein T from Staurastrum punctulatum (Green alga).